The chain runs to 107 residues: Guanylate cyclase activator 2B (107 aa).

The first 21 residues, 1-21, serve as a signal peptide directing secretion; that stretch reads MSGSQLWAAVVVLLLLQSAQG. Positions 22-92 are excised as a propeptide; that stretch reads VYIKYHGFQV…STFKALRTIA (71 aa). Cystine bridges form between Cys-63–Cys-76, Cys-96–Cys-104, and Cys-99–Cys-107.

It belongs to the guanylin family.

It localises to the secreted. Endogenous activator of intestinal guanylate cyclase. It stimulates this enzyme through the same receptor binding region as the heat-stable enterotoxins. May be a potent physiological regulator of intestinal fluid and electrolyte transport. May be an autocrine/paracrine regulator of intestinal salt and water transport. This Notomys alexis (Spinifex hopping mouse) protein is Guanylate cyclase activator 2B (GUCA2B).